Here is a 514-residue protein sequence, read N- to C-terminus: Triacylglyceride transporter MAB_2807 (514 aa).

11 helical membrane-spanning segments follow: residues 19 to 39 (IAIG…YVVV), 58 to 78 (QVTP…PLLG), 88 to 108 (LILQ…ALST), 118 to 138 (VIQG…GADL), 157 to 177 (LGSV…GSWT), 178 to 198 (AIFW…QFSV), 210 to 230 (VDVV…VGLY), 239 to 259 (LPEW…AFIL), 278 to 298 (PFFA…VTLV), 316 to 336 (VFLL…GGWL), and 344 to 364 (IIAV…SGWP). The segment at 371-380 (VHNFGFFTLP) is beta-hairpin. 3 helical membrane passes run 385–405 (DLVV…SAAL), 420–440 (VVVA…GWGI), and 485–505 (MFAI…FVGS).

It belongs to the major facilitator superfamily. P55 (TC 2.A.1.3.34) family.

The protein resides in the cell inner membrane. In terms of biological role, in association with lipoprotein LprG probably transports triacyglycerides (TAG) across the inner cell membrane into the periplasm; TAG probably regulates lipid metabolism and growth regulation and plays a structural role in the outer membrane. TAG (and maybe other lipids) enters the central cavity of the P55 transporter from within the cell inner membrane via clefts on the cytoplasmic face of P55 between TM5-TM8 and TM2-TM11. From there the lipid is probably transferred to the hydrophobic cavity of LprG. Involved in drug susceptibilty, its expression partially complements the antibiotic susceptibilty of a double lprG-mfs deletion. Probably does not function as a bona fide drug efflux pump, but instead plays a role in outer membrane biogenesis. Probably required with LprG for normal surface localization of lipoarabinomannan (LAM). In Mycobacteroides abscessus (strain ATCC 19977 / DSM 44196 / CCUG 20993 / CIP 104536 / JCM 13569 / NCTC 13031 / TMC 1543 / L948) (Mycobacterium abscessus), this protein is Triacylglyceride transporter MAB_2807.